The sequence spans 385 residues: Probable thioesterase PNKD (385 aa).

The segment at 32–58 (KASHNRTRALQSHSSPEGKEEPEPLSP) is disordered. Residues His172, His174, Asp176, His177, His229, Asp253, and His291 each coordinate Zn(2+).

This sequence belongs to the metallo-beta-lactamase superfamily. Glyoxalase II family. Isoform 2 interacts with the sarcomeric proteins, MRLC2, MYOM1 and ENO3. Zn(2+) is required as a cofactor. Undergoes cleavage at the N-terminus. Isoform 1 is only expressed in the brain. Isoform 2 is ubiquitously detected with highest expression in skeletal muscle and detected in myocardial myofibrils.

It is found in the cell membrane. Its subcellular location is the mitochondrion. The protein localises to the cytoplasm. It localises to the golgi apparatus. The protein resides in the endoplasmic reticulum. It carries out the reaction a thioester + H2O = a thiol + a carboxylate + H(+). Its function is as follows. Probable thioesterase that may play a role in cellular detoxification processes; it likely acts on a yet-unknown alpha-hydroxythioester substrate. In vitro, it is able to catalyze the hydrolysis of S-D-lactoyl-glutathione to form glutathione and D-lactic acid at very low rate, though this reaction is not physiologically relevant in vivo. This is Probable thioesterase PNKD (PNKD) from Homo sapiens (Human).